A 713-amino-acid polypeptide reads, in one-letter code: Low-density lipoprotein receptor-related protein 10 (713 aa).

The signal sequence occupies residues 1–17 (MLSALPLLFLLLGGALA). Residues 18–441 (RPDRITFPRS…WDCSYALPRK (424 aa)) lie on the Extracellular side of the membrane. Disulfide bonds link C29–C58 and C81–C99. The CUB 1 domain maps to 29-137 (CEAPPAVLSE…QGFLLTYSQD (109 aa)). N-linked (GlcNAc...) asparagine glycosylation occurs at N57. Residue N112 is glycosylated (N-linked (GlcNAc...) asparagine). One can recognise an LDL-receptor class A 1 domain in the interval 140–176 (LCLQEEFQCLNHRCIPAAQRCDGIDACGDGSDEAGCS). Intrachain disulfides connect C141-C153, C148-C166, C160-C175, and C193-C221. A CUB 2 domain is found at 193-306 (CNLTLEDFYG…RGFNATYHVR (114 aa)). N-linked (GlcNAc...) asparagine glycosylation is found at N194 and N300. 3 consecutive LDL-receptor class A domains span residues 308-355 (YCLP…EGCP), 356-398 (GCPP…RRCR), and 399-435 (HCQPGNFRCRDEKCVYETWVCDGQPDCTDGSDEWDCS). Cystine bridges form between C309/C332, C316/C345, C339/C354, C357/C375, C364/C388, C382/C397, C400/C412, C407/C425, and C419/C434. The helical transmembrane segment at 442-462 (VITAAVIGSLVCGLLLVIALG) threads the bilayer. Topologically, residues 463–713 (CTCKLYAIRT…VEAEDEPLLA (251 aa)) are cytoplasmic. The disordered stretch occupies residues 566 to 636 (LLPRTNTPAR…TLPALATVSE (71 aa)). T596 is modified (phosphothreonine). The segment covering 614–626 (PPLPIKTPIPTPS) has biased composition (pro residues).

This sequence belongs to the LDLR family. In terms of tissue distribution, highly expressed in heart, lung, liver and liver. Expressed at low level in brain and spleen. Weakly or not expressed in testis and skeletal muscle. In liver, it is expressed in hepatocytes and at higher level in sinusoidal lining. In the kidney, it is expressed in peritubular capillaries. In brain, it is expressed in the epithelium of the choroid plexus ependymal cells of the third ventricle pia matter, and to lesser extent in hippocampal fields CA2 and CA3.

The protein resides in the membrane. It localises to the coated pit. Its function is as follows. Probable receptor, which is involved in the internalization of lipophilic molecules and/or signal transduction. May be involved in the uptake of lipoprotein APOE in liver. This Mus musculus (Mouse) protein is Low-density lipoprotein receptor-related protein 10 (Lrp10).